The primary structure comprises 568 residues: Acyl-CoA ligase gloD (568 aa).

ATP is bound by residues threonine 211–lysine 219, proline 352–threonine 357, aspartate 436, arginine 455, and lysine 553. Positions aspartate 282–proline 352 are SBD1. The segment at glycine 353–tyrosine 415 is SBD2.

It belongs to the ATP-dependent AMP-binding enzyme family.

It functions in the pathway mycotoxin biosynthesis. In terms of biological role, acyl-CoA ligase; part of the gene cluster that mediates the biosynthesis of pneumocandins, lipohexapeptides of the echinocandin family that prevent fungal cell wall formation by non-competitive inhibition of beta-1,3-glucan synthase. The 10,12-dimethylmyristoyl side chain is synthesized by the reducing polyketide synthase gloL/GLPKS4. The thioesterase gloN/GLHYD exclusively interacts with gloL/GLPKS4 to maintain turnover of the polyketide side chain. The 10R,12S-dimethylmyristic acid is then transferred to the first thiolation domain of the nonribosomal peptide synthetase gloA/GLNRPS4 by the acyl-AMP ligase gloD/GLligase, followed by its acylation to L-ornithine to trigger elongation of the cyclic hexapeptide. L-ornithine, 4R-hydroxyl-L-proline (generated from L-proline by the dioxygenase gloF/GLOXY2), 3S-hydroxyl-L-homotyrosine (generated by gloG/GLHtyB, gloH/GLHtyA, gloI/GLHtyC, gloJ/GLHtyD and hydroxylated at C-3 by the dioxygenase gloM/GLOXY1), 3R-hydroxyl-L-glutamine (generated from L-glutamine probably by the dioxygenase gloE/GLOXY3) and 3S-hydroxyl-L-proline (generated from L-proline by the dioxygenase gloF/GLOXY2 to yield pneumocandin B0), or 3S-hydroxyl-4S-methyl-L-proline (generated from L-leucine by the dioxygenase gloC/GLOXY4 to yield pneumocandin A0) are sequentially added to the growing chain. The last C domain of gloA/GLNRPS4 is proposed to be responsible for cyclization by condensation to form the peptide bond between L-ornithine and 3S-hydroxyl-4S-methyl-L-proline (for pneumocandin A0) or 3S-hydroxyl-L-proline (for pneumocandin B0). Finally, the subsequent C-4 hydroxylation of 3S-hydroxyl-L-homotyrosine and L-ornithine dihydroxylation at C-4 and C-5 are performed by the cytochrome P450 monooxygenases gloP/GLP450-1 and gloO/GLP450-2, respectively. This Glarea lozoyensis (strain ATCC 20868 / MF5171) protein is Acyl-CoA ligase gloD.